Consider the following 303-residue polypeptide: Crk-like protein (303 aa).

An SH2 domain is found at 14–102 (WYMGPVTRQE…LDTTTLIEPA (89 aa)). An SH3 1 domain is found at 123-183 (ENLEYVRTLY…PVPYVEKLVR (61 aa)). Position 127 is a phosphotyrosine (tyrosine 127). Residues 184-203 (SSPHGKHGNRNSNSYGIPEP) are disordered. Residue tyrosine 207 is modified to Phosphotyrosine. Residues 235 to 296 (NGPVFAKAIQ…PFTHVKIFDP (62 aa)) enclose the SH3 2 domain.

It belongs to the CRK family. Interacts with DOCK2 and EPOR. Interacts with phosphorylated CBLB and IRS4. Interacts with INPP5D/SHIP1. Interacts with BCAR1/CAS and NEDD9/HEF1. Phosphorylated on tyrosine. Phosphorylation is prominent during early development, but decreases at later embryonic stages and in newborn mice.

In terms of biological role, may mediate the transduction of intracellular signals. This chain is Crk-like protein (Crkl), found in Mus musculus (Mouse).